Here is an 82-residue protein sequence, read N- to C-terminus: Conotoxin Gla-TxX (82 aa).

The N-terminal stretch at 1 to 25 (MSGHTSVSFLLLSIVALGMVATVIC) is a signal peptide. A 4-carboxyglutamate mark is found at Glu30, Glu34, Glu37, Glu40, and Glu41. Asn72 carries the asparagine amide modification. A propeptide spanning residues 77-82 (LIHMQK) is cleaved from the precursor.

Post-translationally, contains 4 disulfide bonds. As to expression, expressed by the venom duct.

The protein resides in the secreted. This Conus textile (Cloth-of-gold cone) protein is Conotoxin Gla-TxX.